The chain runs to 158 residues: pH 6 antigen (158 aa).

Residues 1–26 (MKMKCFAKNALAVTTLMIAACGMANA) form the signal peptide.

In terms of assembly, forms a homomer composed of subunits assembled in a large structure.

The protein localises to the fimbrium. Functionally, fibrillar structure, part of fimbriae, necessary for full virulence. In Yersinia pestis, this protein is pH 6 antigen (psaA).